The sequence spans 45 residues: Putative purine permease 9 (45 aa).

Not detected in seedlings, leaves, embryos or root and shoot meristems.

The polypeptide is Putative purine permease 9 (Arabidopsis thaliana (Mouse-ear cress)).